The primary structure comprises 171 residues: 3-hydroxydecanoyl-[acyl-carrier-protein] dehydratase (171 aa).

His70 is an active-site residue.

It belongs to the thioester dehydratase family. FabA subfamily. Homodimer.

It is found in the cytoplasm. It catalyses the reaction a (3R)-hydroxyacyl-[ACP] = a (2E)-enoyl-[ACP] + H2O. The catalysed reaction is (3R)-hydroxydecanoyl-[ACP] = (2E)-decenoyl-[ACP] + H2O. It carries out the reaction (2E)-decenoyl-[ACP] = (3Z)-decenoyl-[ACP]. It functions in the pathway lipid metabolism; fatty acid biosynthesis. Necessary for the introduction of cis unsaturation into fatty acids. Catalyzes the dehydration of (3R)-3-hydroxydecanoyl-ACP to E-(2)-decenoyl-ACP and then its isomerization to Z-(3)-decenoyl-ACP. Can catalyze the dehydratase reaction for beta-hydroxyacyl-ACPs with saturated chain lengths up to 16:0, being most active on intermediate chain length. The chain is 3-hydroxydecanoyl-[acyl-carrier-protein] dehydratase from Mesorhizobium japonicum (strain LMG 29417 / CECT 9101 / MAFF 303099) (Mesorhizobium loti (strain MAFF 303099)).